A 514-amino-acid chain; its full sequence is Carboxysome shell carbonic anhydrase (514 aa).

The disordered stretch occupies residues Met-1 to Val-27. Residue Cys-175 coordinates Zn(2+). Asp-177 acts as the Proton acceptor in catalysis. The Zn(2+) site is built by His-243 and Cys-254.

This sequence belongs to the beta-class carbonic anhydrase family. CsoSCA subfamily. In terms of assembly, homodimer. It depends on Zn(2+) as a cofactor.

Its subcellular location is the carboxysome. It carries out the reaction hydrogencarbonate + H(+) = CO2 + H2O. In terms of biological role, reversible hydration of carbon dioxide. Essential for photosynthetic carbon dioxide fixation, supplies CO(2) to RuBisCO (ribulose bisphosphate carboxylase, cbbL-cbbS) in the carboxysome. This is Carboxysome shell carbonic anhydrase from Prochlorococcus marinus (strain MIT 9313).